We begin with the raw amino-acid sequence, 300 residues long: Bifunctional protein FolD 2 (300 aa).

Residues 165 to 167 (GRS), S190, and I231 each bind NADP(+).

The protein belongs to the tetrahydrofolate dehydrogenase/cyclohydrolase family. In terms of assembly, homodimer.

The catalysed reaction is (6R)-5,10-methylene-5,6,7,8-tetrahydrofolate + NADP(+) = (6R)-5,10-methenyltetrahydrofolate + NADPH. It carries out the reaction (6R)-5,10-methenyltetrahydrofolate + H2O = (6R)-10-formyltetrahydrofolate + H(+). The protein operates within one-carbon metabolism; tetrahydrofolate interconversion. In terms of biological role, catalyzes the oxidation of 5,10-methylenetetrahydrofolate to 5,10-methenyltetrahydrofolate and then the hydrolysis of 5,10-methenyltetrahydrofolate to 10-formyltetrahydrofolate. The sequence is that of Bifunctional protein FolD 2 from Pseudomonas syringae pv. tomato (strain ATCC BAA-871 / DC3000).